We begin with the raw amino-acid sequence, 122 residues long: MARIAGVNIPTNKRVVIALQYIHGIGPKLAREITSKVGIPDDRRVHQLTDAEVLAIREAIDRDYQVEGDLRREVSMNIKRLMDLGCYRGLRHRRSLPVRGQRTHTNARTRKGPAKPIAGKKK.

The segment at 93-122 is disordered; that stretch reads RRSLPVRGQRTHTNARTRKGPAKPIAGKKK.

It belongs to the universal ribosomal protein uS13 family. As to quaternary structure, part of the 30S ribosomal subunit. Forms a loose heterodimer with protein S19. Forms two bridges to the 50S subunit in the 70S ribosome.

Functionally, located at the top of the head of the 30S subunit, it contacts several helices of the 16S rRNA. In the 70S ribosome it contacts the 23S rRNA (bridge B1a) and protein L5 of the 50S subunit (bridge B1b), connecting the 2 subunits; these bridges are implicated in subunit movement. Contacts the tRNAs in the A and P-sites. The chain is Small ribosomal subunit protein uS13 from Chelativorans sp. (strain BNC1).